The following is a 169-amino-acid chain: Large ribosomal subunit protein uL15 (169 aa).

Residues 1–13 (MKLNEIRDNEGAT) are compositionally biased toward basic and acidic residues. Residues 1-40 (MKLNEIRDNEGATKNRMRVGRGIGSGKGKTGGRGVKGQKA) are disordered. Residues 21-35 (RGIGSGKGKTGGRGV) are compositionally biased toward gly residues.

It belongs to the universal ribosomal protein uL15 family. Part of the 50S ribosomal subunit.

Its function is as follows. Binds to the 23S rRNA. The chain is Large ribosomal subunit protein uL15 from Methylorubrum populi (strain ATCC BAA-705 / NCIMB 13946 / BJ001) (Methylobacterium populi).